The chain runs to 106 residues: UPF0145 protein (106 aa).

The protein belongs to the UPF0145 family.

The chain is UPF0145 protein from Listeria grayi (Listeria murrayi).